The primary structure comprises 100 residues: MASVNIKPLEDKILVQANEAETTTASGLVIPDTAKEKPQEGTVVAVGPGRWDEDGEKRIPLDVQEGDTVIYSKYGGTEIKYQGEEYLILSARDVLAVVGK.

Belongs to the GroES chaperonin family. Heptamer of 7 subunits arranged in a ring. Interacts with the chaperonin GroEL.

It is found in the cytoplasm. Its function is as follows. Together with the chaperonin GroEL, plays an essential role in assisting protein folding. The GroEL-GroES system forms a nano-cage that allows encapsulation of the non-native substrate proteins and provides a physical environment optimized to promote and accelerate protein folding. GroES binds to the apical surface of the GroEL ring, thereby capping the opening of the GroEL channel. The polypeptide is Co-chaperonin GroES (Nocardia farcinica (strain IFM 10152)).